A 237-amino-acid chain; its full sequence is Sugar fermentation stimulation protein homolog (237 aa).

This sequence belongs to the SfsA family.

This is Sugar fermentation stimulation protein homolog from Pseudomonas fluorescens (strain ATCC BAA-477 / NRRL B-23932 / Pf-5).